The primary structure comprises 123 residues: uncharacterized protein (123 aa).

This is an uncharacterized protein from Homo sapiens (Human).